A 131-amino-acid chain; its full sequence is Small ribosomal subunit protein uS11 (131 aa).

The protein belongs to the universal ribosomal protein uS11 family. Part of the 30S ribosomal subunit. Interacts with proteins S7 and S18. Binds to IF-3.

In terms of biological role, located on the platform of the 30S subunit, it bridges several disparate RNA helices of the 16S rRNA. Forms part of the Shine-Dalgarno cleft in the 70S ribosome. This is Small ribosomal subunit protein uS11 from Saccharophagus degradans (strain 2-40 / ATCC 43961 / DSM 17024).